Reading from the N-terminus, the 551-residue chain is Terpene synthase 10 (551 aa).

Residues D303, D307, and E455 each contribute to the Mg(2+) site. A DDXXD motif motif is present at residues 303-307; that stretch reads DDIYD.

The protein belongs to the terpene synthase family. Mg(2+) serves as cofactor.

Functionally, catalyzes the cyclization of farnesyl diphosphate to sesquiterpene olefins. In Ricinus communis (Castor bean), this protein is Terpene synthase 10 (TPS10).